The primary structure comprises 500 residues: MAIFDNYEVWFVIGSQHLYGPETLRQVTQHAEHVVNALNTEAKLPYKLVLKPLGTTPDEITAICRDANYDDRCAGLVVWLHTFSPAKMWINGLTMLNKPLLQFHTQFNAALPWDSIDMDFMNLNQTAHGGREFGFIGARMRQQHAVVTGHWQDKQAHERIGSWMRQAVSKQDTRHLKVCRFGDNMREVAVTDGDKVAAQIKFGFSVNTWAVGYLVQVVNSISDGDVNALVDEYESCYTMTPATQIHGEKRQNVLEAARIELGMKRFLEQGGFHAFTTTFEDLHGLKQLPGLPVQRLMQQGYGFAGEGDWKTAALLRIMKVMSTGLQGGTSFMEDYTYHFEKGNDLVLGSHMLEVCPSIAVEEKPILDVQHLGIGGKDDPARLIFNTQTGPAIVASLIDLGDRYRLLVNCIDTVKTPHSLPKLPVANALWKAQPDLPTASEAWILAGGAHHTVFSHALNLNDMRQFAEMHDIEITVIDNDTRLPAFKDALRWNEVYYGFRR.

Glu-306, Glu-333, His-350, and His-450 together coordinate Mn(2+).

It belongs to the arabinose isomerase family. Homohexamer. Requires Mn(2+) as cofactor.

It carries out the reaction beta-L-arabinopyranose = L-ribulose. It participates in carbohydrate degradation; L-arabinose degradation via L-ribulose; D-xylulose 5-phosphate from L-arabinose (bacterial route): step 1/3. Its function is as follows. Catalyzes the conversion of L-arabinose to L-ribulose. The polypeptide is L-arabinose isomerase (Shigella flexneri).